The following is a 461-amino-acid chain: Probable tubulin polyglutamylase TTLL9 (461 aa).

A compositionally biased stretch (polar residues) spans 1 to 10 (MSRQKSQTSK). Residues 1 to 20 (MSRQKSQTSKGHGASKGKER) form a disordered region. A TTL domain is found at 22 to 402 (QRTLIRFKTT…EARLTGKEKR (381 aa)). ATP contacts are provided by residues Lys149 and 155–156 (QG). Gln155 is a binding site for a protein. Residues 186-197 (QATRANVNPSGS) are compositionally biased toward polar residues. The disordered stretch occupies residues 186-208 (QATRANVNPSGSHDTRSSDDQKD). Over residues 198-208 (HDTRSSDDQKD) the composition is skewed to basic and acidic residues. ATP-binding positions include 218–221 (QRYV) and 231–233 (KFD). Position 257 (Arg257) interacts with L-glutamate. 276–277 (TN) contributes to the ATP binding site. Lys294 provides a ligand contact to L-glutamate. Mg(2+) contacts are provided by Asp348, Glu361, and Asn363. Position 379 (Lys379) interacts with L-glutamate.

It belongs to the tubulin--tyrosine ligase family. Mg(2+) serves as cofactor.

It localises to the cytoplasm. Its subcellular location is the cytoskeleton. The protein localises to the cilium basal body. The protein resides in the flagellum axoneme. The catalysed reaction is (L-glutamyl)(n)-gamma-L-glutamyl-L-glutamyl-[protein] + L-glutamate + ATP = (L-glutamyl)(n+1)-gamma-L-glutamyl-L-glutamyl-[protein] + ADP + phosphate + H(+). Its function is as follows. Probable tubulin polyglutamylase that generates side chains of glutamate on the gamma-carboxyl group of specific glutamate residues within the C-terminal tail of target proteins. Similar to TTLL1, may acquire enzymatic activity only in complex with other proteins as it is most likely lacking domains important for autonomous activity. Mediates tubulin polyglutamylation which induces establishment of microtubule heterogeneity in sperm flagella, thereby playing a role in normal motile flagella axoneme structure and sperm flagella beating pattern. The sequence is that of Probable tubulin polyglutamylase TTLL9 (Ttll9) from Rattus norvegicus (Rat).